A 251-amino-acid chain; its full sequence is Fibroblast growth factor-binding protein 1 (251 aa).

An N-terminal signal peptide occupies residues 1–20 (MRLHSLILLSFLLLATQAFS). Residues 25–62 (KRAKNAPHSTAEEGVEGSAPSLGKAQNKQRSRTSKSLT) are disordered. Cystine bridges form between cysteine 74–cysteine 91, cysteine 100–cysteine 133, and cysteine 109–cysteine 145. The disordered stretch occupies residues 160-189 (NARGNTKPRKEKAEVSAREHNKVQEAVSTE). The span at 170–182 (EKAEVSAREHNKV) shows a compositional bias: basic and acidic residues. Serine 175 carries an O-linked (GalNAc...) serine glycan. The sufficient for interaction with FGF2 and FGF2-induced effects stretch occupies residues 210–251 (RDPECLEDPDVLNQRKTALEFCGESWSSICTFFLNMLQATSC). Intrachain disulfides connect cysteine 214/cysteine 251 and cysteine 231/cysteine 239.

The protein belongs to the fibroblast growth factor-binding protein family. As to quaternary structure, found in a complex with FGFBP1, FGF1 and FGF2. Interacts with FGF1, FGF7, FGF10, FGF22 and HSPG2. Interacts with FGF2. As to expression, expressed in intestine, ovary, lung, placenta and normal and wounded skin.

It localises to the secreted. The protein resides in the extracellular space. It is found in the cell membrane. Its function is as follows. Acts as a carrier protein that releases fibroblast-binding factors (FGFs) from the extracellular matrix (EM) storage and thus enhances the mitogenic activity of FGFs. Enhances FGF2 signaling during tissue repair, angiogenesis and in tumor growth. This Mus musculus (Mouse) protein is Fibroblast growth factor-binding protein 1 (Fgfbp1).